Reading from the N-terminus, the 304-residue chain is MRLLPEWLLLLFGPWLLRKVISGQIVESGRPQYLDLRPAMAGGGARGQQLPVPASSEGLNPVRSWSWAWPANHTGALARPGAAGGPPVPRTKRKPSIKAARAKKIFGWGDFYFRVHTLKFSLLVTGKIVDHVNGTFSVYFRHNSSSLGNLSVSIVPPSKRVEFGGVWLPGPAPHPLQSTLALEGVLPGLGPPLGMAGQGLGGNLGGALAGPLGGALGVPGAKESRAFNCHVEYEKTNRARKHRPCLYDPSQVCFTEHTQSQAAWLCAKPFKVICIFVSFLSFDYKLVQKVCPDYNFQSEHPYFG.

The N-terminal stretch at Met1–Gly23 is a signal peptide. An II region spans residues Gln24–Gly84. Asn72, Asn133, Asn143, and Asn149 each carry an N-linked (GlcNAc...) asparagine glycan. The III stretch occupies residues Gly85 to Phe163. Positions Gly164–Gly220 are IV (linker domain). A v (Cys-rich) region spans residues Ala221–Gly304.

The protein belongs to the neurexophilin family. In terms of processing, may be proteolytically processed in neuron-like cells. Brain and kidney.

It is found in the secreted. May be signaling molecules that resemble neuropeptides and that act by binding to alpha-neurexins and possibly other receptors. This is Neurexophilin-4 (Nxph4) from Rattus norvegicus (Rat).